We begin with the raw amino-acid sequence, 255 residues long: Sulfate transporter CysZ (255 aa).

4 helical membrane passes run 26–46 (LFVL…IYFA), 71–91 (LLWP…FTML), 150–170 (LFIL…WLLF), and 211–231 (IVYL…AAVA).

Belongs to the CysZ family.

Its subcellular location is the cell inner membrane. Its function is as follows. High affinity, high specificity proton-dependent sulfate transporter, which mediates sulfate uptake. Provides the sulfur source for the cysteine synthesis pathway. The sequence is that of Sulfate transporter CysZ from Pseudomonas fluorescens (strain SBW25).